The following is a 197-amino-acid chain: Large ribosomal subunit protein bL17 (197 aa).

The segment at 136-197 (RAAKKADAPQ…DAEKSSDTEK (62 aa)) is disordered. A compositionally biased stretch (acidic residues) spans 148–187 (VADEATDADESVEDEAPAQDDSADEVEAAADETPADDAEA). Residues 188–197 (DAEKSSDTEK) show a composition bias toward basic and acidic residues.

Belongs to the bacterial ribosomal protein bL17 family. As to quaternary structure, part of the 50S ribosomal subunit. Contacts protein L32.

The polypeptide is Large ribosomal subunit protein bL17 (Beutenbergia cavernae (strain ATCC BAA-8 / DSM 12333 / CCUG 43141 / JCM 11478 / NBRC 16432 / NCIMB 13614 / HKI 0122)).